The primary structure comprises 255 residues: Type III pantothenate kinase (255 aa).

6 to 13 (DVGNTNIV) lines the ATP pocket. Residues Tyr-100 and 107 to 110 (GADR) contribute to the substrate site. Residue Asp-109 is the Proton acceptor of the active site. Residue Asp-129 coordinates K(+). Thr-132 is a binding site for ATP. Position 184 (Thr-184) interacts with substrate.

Belongs to the type III pantothenate kinase family. In terms of assembly, homodimer. NH4(+) serves as cofactor. It depends on K(+) as a cofactor.

It localises to the cytoplasm. The catalysed reaction is (R)-pantothenate + ATP = (R)-4'-phosphopantothenate + ADP + H(+). It functions in the pathway cofactor biosynthesis; coenzyme A biosynthesis; CoA from (R)-pantothenate: step 1/5. In terms of biological role, catalyzes the phosphorylation of pantothenate (Pan), the first step in CoA biosynthesis. This chain is Type III pantothenate kinase, found in Geobacter sulfurreducens (strain ATCC 51573 / DSM 12127 / PCA).